The primary structure comprises 406 residues: Histidine--tRNA ligase (406 aa).

The protein belongs to the class-II aminoacyl-tRNA synthetase family. Homodimer.

Its subcellular location is the cytoplasm. The enzyme catalyses tRNA(His) + L-histidine + ATP = L-histidyl-tRNA(His) + AMP + diphosphate + H(+). This Nitratiruptor sp. (strain SB155-2) protein is Histidine--tRNA ligase.